We begin with the raw amino-acid sequence, 557 residues long: Potassium-transporting ATPase potassium-binding subunit (557 aa).

A run of 12 helical transmembrane segments spans residues 5-25 (GFLL…PLGS), 63-83 (LCAI…MLLG), 132-152 (GLTV…FALI), 170-190 (LLRI…LFFI), 253-273 (FVQM…FGEV), 283-303 (LLWA…WAEV), 329-349 (VLVS…AVIA), 356-376 (ALGG…FGGV), 379-399 (GLYG…LMIG), 416-436 (LTAL…ALAM), 484-504 (LLAF…MAIA), and 526-546 (LFVG…FIPA).

It belongs to the KdpA family. As to quaternary structure, the system is composed of three essential subunits: KdpA, KdpB and KdpC.

It is found in the cell inner membrane. Functionally, part of the high-affinity ATP-driven potassium transport (or Kdp) system, which catalyzes the hydrolysis of ATP coupled with the electrogenic transport of potassium into the cytoplasm. This subunit binds the periplasmic potassium ions and delivers the ions to the membrane domain of KdpB through an intramembrane tunnel. The polypeptide is Potassium-transporting ATPase potassium-binding subunit (Escherichia coli (strain K12 / MC4100 / BW2952)).